Reading from the N-terminus, the 526-residue chain is Phosphoenolpyruvate carboxykinase (ATP) 2 (526 aa).

Residues arginine 55, tyrosine 190, and lysine 196 each contribute to the substrate site. ATP is bound by residues lysine 196, histidine 215, and 231-239 (GLSGTGKTT). The Mn(2+) site is built by lysine 196 and histidine 215. Aspartate 252 serves as a coordination point for Mn(2+). ATP is bound by residues glutamate 280, arginine 317, and threonine 442. Residue arginine 317 coordinates substrate.

The protein belongs to the phosphoenolpyruvate carboxykinase (ATP) family. Mn(2+) is required as a cofactor.

It localises to the cytoplasm. The catalysed reaction is oxaloacetate + ATP = phosphoenolpyruvate + ADP + CO2. The protein operates within carbohydrate biosynthesis; gluconeogenesis. Involved in the gluconeogenesis. Catalyzes the conversion of oxaloacetate (OAA) to phosphoenolpyruvate (PEP) through direct phosphoryl transfer between the nucleoside triphosphate and OAA. In Moorella thermoacetica (strain ATCC 39073 / JCM 9320), this protein is Phosphoenolpyruvate carboxykinase (ATP) 2.